Here is a 258-residue protein sequence, read N- to C-terminus: UPF0246 protein VV1_0535 (258 aa).

Belongs to the UPF0246 family.

In Vibrio vulnificus (strain CMCP6), this protein is UPF0246 protein VV1_0535.